Reading from the N-terminus, the 299-residue chain is ATP phosphoribosyltransferase (299 aa).

Belongs to the ATP phosphoribosyltransferase family. Long subfamily. Mg(2+) is required as a cofactor.

Its subcellular location is the cytoplasm. It carries out the reaction 1-(5-phospho-beta-D-ribosyl)-ATP + diphosphate = 5-phospho-alpha-D-ribose 1-diphosphate + ATP. Its pathway is amino-acid biosynthesis; L-histidine biosynthesis; L-histidine from 5-phospho-alpha-D-ribose 1-diphosphate: step 1/9. Its activity is regulated as follows. Feedback inhibited by histidine. Functionally, catalyzes the condensation of ATP and 5-phosphoribose 1-diphosphate to form N'-(5'-phosphoribosyl)-ATP (PR-ATP). Has a crucial role in the pathway because the rate of histidine biosynthesis seems to be controlled primarily by regulation of HisG enzymatic activity. This chain is ATP phosphoribosyltransferase, found in Campylobacter jejuni subsp. jejuni serotype O:6 (strain 81116 / NCTC 11828).